A 434-amino-acid chain; its full sequence is 3-ketoacyl-CoA thiolase A, peroxisomal (434 aa).

A peroxisome-targeting transit peptide spans Met1–Cys36. The interval Met11 to Cys36 is PTS2-type peroxisomal targeting signal. Cys133 serves as the catalytic Acyl-thioester intermediate. Residues Lys183 and Lys244 each carry the N6-acetyllysine modification. Residues His387 and Cys418 each act as proton acceptor in the active site.

It belongs to the thiolase-like superfamily. Thiolase family. As to quaternary structure, homodimer. Interacts (via PTS2-type peroxisomal targeting signal region) with PEX7; leading to its translocation into peroxisomes.

The protein localises to the peroxisome. It catalyses the reaction an acyl-CoA + acetyl-CoA = a 3-oxoacyl-CoA + CoA. It carries out the reaction 2 acetyl-CoA = acetoacetyl-CoA + CoA. The enzyme catalyses tetradecanoyl-CoA + acetyl-CoA = 3-oxohexadecanoyl-CoA + CoA. The catalysed reaction is hexanoyl-CoA + acetyl-CoA = 3-oxooctanoyl-CoA + CoA. It catalyses the reaction 3-oxohexadecanedioyl-CoA + CoA = tetradecanedioyl-CoA + acetyl-CoA. It carries out the reaction 3-oxo-(6Z,9Z,12Z,15Z,18Z,21Z)-tetracosahexaenoyl-CoA + CoA = (4Z,7Z,10Z,13Z,16Z,19Z)-docosahexaenoyl-CoA + acetyl-CoA. It participates in lipid metabolism; peroxisomal fatty acid beta-oxidation. Functionally, responsible for the thiolytic cleavage of straight chain 3-keto fatty acyl-CoAs (3-oxoacyl-CoAs). Plays an important role in fatty acid peroxisomal beta-oxidation. Catalyzes the cleavage of short, medium, long, and very long straight chain 3-oxoacyl-CoAs. Medium chain straight 3-oxoacyl-CoAs are preferred substrates. In Rattus norvegicus (Rat), this protein is 3-ketoacyl-CoA thiolase A, peroxisomal.